Consider the following 155-residue polypeptide: Gas vesicle protein K (155 aa).

The protein belongs to the gas vesicle GvpK family.

Its subcellular location is the gas vesicle. Its function is as follows. Might be involved in nucleating gas vesicle formation. Gas vesicles (GV) are hollow, gas filled proteinaceous nanostructures. During planktonic growth they allow positioning of the organism at a favorable depth for light or nutrient acquisition. Functionally, cluster expression in E.coli (gvpA1-gvpA2-gvpC-gvpN-gvpJ-gvpK-gvpF-gvpG-gvpV-gvpW) allows cells to float and produces irregularly shaped gas vesicles. In Nostoc sp. (strain PCC 7120 / SAG 25.82 / UTEX 2576), this protein is Gas vesicle protein K.